The primary structure comprises 395 residues: MTQVVPGIAPHGGQLIQRIATAAERQEFLAQADHLPRVQLDERALSDLVMIAIGGFSPLNGFMGQTDYESVVDDMRLANGLPWSVPITLSVTEEVAEPLKEGGWVRLDDAQGRFVGVLELTQKYRYNKVHEATNVYRTDEEQHPGVAVVYAQGPINLAGPIWLLQRDAHPLFPSYQIDPIASRQQFADRGWKTVVGFQTRNPIHRAHEYIIKCALETVDGLFLHPLVGATKSDDIPADVRMRCYEIMLEHYFPQDRVILAINPSAMRYAGPREAIFHALIRKNYGCTHFIVGRDHAGVGNYYGTYDAQHLFDEFKPEELGILPMKFEHAFYCTRTQAMASTKTSPSSPEERIHLSGTKVRELLRKGELPPPEFSRPEVAAELIRAMRSDSEVAAV.

This sequence belongs to the sulfate adenylyltransferase family.

It catalyses the reaction sulfate + ATP + H(+) = adenosine 5'-phosphosulfate + diphosphate. Its pathway is sulfur metabolism; hydrogen sulfide biosynthesis; sulfite from sulfate: step 1/3. The chain is Sulfate adenylyltransferase from Synechococcus elongatus (strain ATCC 33912 / PCC 7942 / FACHB-805) (Anacystis nidulans R2).